The following is a 182-amino-acid chain: Ribosome-recycling factor (182 aa).

The disordered stretch occupies residues 136–160 (VKKSEKDGDLSEDQSRDEQETIQKE).

It belongs to the RRF family.

Its subcellular location is the cytoplasm. Responsible for the release of ribosomes from messenger RNA at the termination of protein biosynthesis. May increase the efficiency of translation by recycling ribosomes from one round of translation to another. This Prochlorococcus marinus (strain NATL2A) protein is Ribosome-recycling factor.